Consider the following 138-residue polypeptide: MRILGLDVGDRTIGVAISDPLGWTAQGVKTIKRSNLKNDIKEIEDICNEYKVDKIVSGLPKNMNGTLGPQSEKVTEFCDILKKELEKEIIMWDERLTTVAAHKAMIEGDLSRAKRKKIVDKIAAIYILQGYLDSVYNK.

The protein belongs to the YqgF nuclease family.

The protein resides in the cytoplasm. Functionally, could be a nuclease involved in processing of the 5'-end of pre-16S rRNA. The sequence is that of Putative pre-16S rRNA nuclease from Clostridium tetani (strain Massachusetts / E88).